Reading from the N-terminus, the 191-residue chain is Putative acetyltransferase DDB_G0280825 (191 aa).

It belongs to the transferase hexapeptide repeat family.

The polypeptide is Putative acetyltransferase DDB_G0280825 (Dictyostelium discoideum (Social amoeba)).